Here is a 1122-residue protein sequence, read N- to C-terminus: DNA polymerase (1122 aa).

Belongs to the DNA polymerase type-B family. In terms of assembly, heterodimer with the terminal protein; this heterodimer binds to bp 9 to 18 of the genome. Forms a complex with viral pTP, DBP and hosts NFIA and POU2F1/OCT1 for initiation of replication.

The protein localises to the host nucleus. It carries out the reaction DNA(n) + a 2'-deoxyribonucleoside 5'-triphosphate = DNA(n+1) + diphosphate. Its function is as follows. Eukaryotic-type DNA polymerase involved in viral genomic replication. DNA synthesis is protein primed, and acts in a strand displacement replication. Assembles in complex with viral pTP, DBP, host NFIA and host POU2F1/OCT1 on viral origin of replication. The polymerase covalently transfers dCMP onto pTP, thereby initiating complementary strand synthesis. The chain is DNA polymerase from Human adenovirus B serotype 7 (HAdV-7).